The chain runs to 229 residues: Uracil-DNA glycosylase (229 aa).

The active-site Proton acceptor is Asp-70.

This sequence belongs to the uracil-DNA glycosylase (UDG) superfamily. UNG family.

The protein resides in the cytoplasm. The catalysed reaction is Hydrolyzes single-stranded DNA or mismatched double-stranded DNA and polynucleotides, releasing free uracil.. Its function is as follows. Excises uracil residues from the DNA which can arise as a result of misincorporation of dUMP residues by DNA polymerase or due to deamination of cytosine. This is Uracil-DNA glycosylase from Chlamydia trachomatis serovar A (strain ATCC VR-571B / DSM 19440 / HAR-13).